A 513-amino-acid polypeptide reads, in one-letter code: ATP synthase subunit alpha (513 aa).

An ATP-binding site is contributed by 169-176 (GDRQTGKT).

This sequence belongs to the ATPase alpha/beta chains family. F-type ATPases have 2 components, CF(1) - the catalytic core - and CF(0) - the membrane proton channel. CF(1) has five subunits: alpha(3), beta(3), gamma(1), delta(1), epsilon(1). CF(0) has three main subunits: a(1), b(2) and c(9-12). The alpha and beta chains form an alternating ring which encloses part of the gamma chain. CF(1) is attached to CF(0) by a central stalk formed by the gamma and epsilon chains, while a peripheral stalk is formed by the delta and b chains.

It is found in the cell inner membrane. It carries out the reaction ATP + H2O + 4 H(+)(in) = ADP + phosphate + 5 H(+)(out). In terms of biological role, produces ATP from ADP in the presence of a proton gradient across the membrane. The alpha chain is a regulatory subunit. This is ATP synthase subunit alpha from Actinobacillus pleuropneumoniae serotype 3 (strain JL03).